Consider the following 150-residue polypeptide: Large ribosomal subunit protein bL9 (150 aa).

The protein belongs to the bacterial ribosomal protein bL9 family.

In terms of biological role, binds to the 23S rRNA. This chain is Large ribosomal subunit protein bL9, found in Polynucleobacter necessarius subsp. necessarius (strain STIR1).